The sequence spans 195 residues: Ubiquitin-conjugating enzyme E2 T (195 aa).

The 151-residue stretch at 2–152 (QRTSRLKREL…ARQWTEKHAR (151 aa)) folds into the UBC core domain. Cys-86 serves as the catalytic Glycyl thioester intermediate. A Glycyl lysine isopeptide (Lys-Gly) (interchain with G-Cter in ubiquitin) cross-link involves residue Lys-91. Residues 146-157 (WTEKHARQKTDE) show a composition bias toward basic and acidic residues. The interval 146 to 195 (WTEKHARQKTDEEGMPGSLPEVGGSEGPSAAQKRKAGQLSSGGKRFCPDV) is disordered. A Glycyl lysine isopeptide (Lys-Gly) (interchain with G-Cter in ubiquitin) cross-link involves residue Lys-180. Lys-189 is covalently cross-linked (Glycyl lysine isopeptide (Lys-Gly) (interchain with G-Cter in SUMO2)).

The protein belongs to the ubiquitin-conjugating enzyme family. In terms of assembly, interacts with FANCL and BRCA1. Post-translationally, auto-ubiquitinated. Effects of auto-monoubiquitination at Lys-91 and Lys-180 are unclear.

The protein resides in the nucleus. It catalyses the reaction S-ubiquitinyl-[E1 ubiquitin-activating enzyme]-L-cysteine + [E2 ubiquitin-conjugating enzyme]-L-cysteine = [E1 ubiquitin-activating enzyme]-L-cysteine + S-ubiquitinyl-[E2 ubiquitin-conjugating enzyme]-L-cysteine.. It functions in the pathway protein modification; protein ubiquitination. Its function is as follows. Accepts ubiquitin from the E1 complex and catalyzes its covalent attachment to other proteins. Catalyzes monoubiquitination. Involved in mitomycin-C (MMC)-induced DNA repair: acts as a specific E2 ubiquitin-conjugating enzyme for the Fanconi anemia complex by associating with E3 ubiquitin-protein ligase FANCL and catalyzing monoubiquitination of FANCD2, a key step in the DNA damage pathway. Also mediates monoubiquitination of FANCL and FANCI. May contribute to ubiquitination and degradation of BRCA1. In vitro able to promote polyubiquitination using all 7 ubiquitin Lys residues, but may prefer 'Lys-11'-, 'Lys-27'-, 'Lys-48'- and 'Lys-63'-linked polyubiquitination. This chain is Ubiquitin-conjugating enzyme E2 T (UBE2T), found in Bos taurus (Bovine).